The primary structure comprises 590 residues: Regulatory solute carrier protein family 1 member 1 (590 aa).

Disordered stretches follow at residues 1–116, 144–234, 277–331, and 359–466; these read MSSS…TQGL, EEGW…PDSE, SPSS…AEES, and EEVT…SHRT. Polar residues predominate over residues 16 to 35; that stretch reads SSGQSPEAGNPTSLARSVSA. Positions 78 to 91 are enriched in low complexity; the sequence is SPCAAAAAPSSAMP. Residues 150–161 are compositionally biased toward polar residues; that stretch reads ENQNPSQVNDLQ. Composition is skewed to basic and acidic residues over residues 162-179 and 188-203; these read QHQE…RDAP and PGER…REAT. The segment covering 313–331 has biased composition (low complexity); it reads SSSSVCGSSQPPAESAEES. Over residues 362–376 the composition is skewed to polar residues; that stretch reads TCQSEGTAWGQTRVN. Basic and acidic residues-rich tracts occupy residues 380-395 and 404-420; these read RWTE…DRPQ and VKTE…RIED. Positions 451-465 are enriched in polar residues; that stretch reads SVTVTSAETSNQSHR. In terms of domain architecture, UBA spans 544–584; that stretch reads GFPAADIDRILRAGFTLQEALGALHRVGGNADLALLVLLAK.

Interacts with YRDC. As to expression, highly expressed in renal outer medulla, renal inner medulla, duodenum, ileum and jejunum. Moderately expressed in renal outer cortex, renal papilla, brain and liver.

Its subcellular location is the cell membrane. It localises to the nucleus. The protein resides in the golgi apparatus. The protein localises to the trans-Golgi network. Its function is as follows. Mediates transcriptional and post-transcriptional regulation of SLC5A1. Inhibits a dynamin and PKC-dependent exocytotic pathway of SLC5A1. Also involved in transcriptional regulation of SLC22A2. Exhibits glucose-dependent, short-term inhibition of SLC5A1 and SLC22A2 by inhibiting the release of vesicles from the trans-Golgi network. The polypeptide is Regulatory solute carrier protein family 1 member 1 (RSC1A1) (Oryctolagus cuniculus (Rabbit)).